A 224-amino-acid polypeptide reads, in one-letter code: Urease accessory protein UreF (224 aa).

The protein belongs to the UreF family. UreD, UreF and UreG form a complex that acts as a GTP-hydrolysis-dependent molecular chaperone, activating the urease apoprotein by helping to assemble the nickel containing metallocenter of UreC. The UreE protein probably delivers the nickel.

It localises to the cytoplasm. Required for maturation of urease via the functional incorporation of the urease nickel metallocenter. This Klebsiella pneumoniae subsp. pneumoniae (strain ATCC 700721 / MGH 78578) protein is Urease accessory protein UreF.